Consider the following 448-residue polypeptide: Antizyme inhibitor 1 (448 aa).

It belongs to the Orn/Lys/Arg decarboxylase class-II family. ODC antizyme inhibitor subfamily. In terms of assembly, monomer. Interacts with OAZ1 and OAZ3; this interaction disrupts the interaction between the antizyme and ODC1. Post-translationally, ubiquitinated, leading to its proteasomal degradation; a process that is reduced in presence of antizyme OAZ1.

The protein resides in the nucleus. Functionally, antizyme inhibitor (AZI) protein that positively regulates ornithine decarboxylase (ODC) activity and polyamine uptake. AZI is an enzymatically inactive ODC homolog that counteracts the negative effect of ODC antizymes (AZs) OAZ1, OAZ2 and OAZ3 on ODC activity by competing with ODC for antizyme-binding. Inhibits antizyme-dependent ODC degradation and releases ODC monomers from their inactive complex with antizymes, leading to formation of the catalytically active ODC homodimer and restoring polyamine production. This is Antizyme inhibitor 1 (AZIN1) from Pongo abelii (Sumatran orangutan).